We begin with the raw amino-acid sequence, 194 residues long: ATP synthase subunit delta (194 aa).

It belongs to the ATPase delta chain family. As to quaternary structure, F-type ATPases have 2 components, F(1) - the catalytic core - and F(0) - the membrane proton channel. F(1) has five subunits: alpha(3), beta(3), gamma(1), delta(1), epsilon(1). F(0) has three main subunits: a(1), b(2) and c(10-14). The alpha and beta chains form an alternating ring which encloses part of the gamma chain. F(1) is attached to F(0) by a central stalk formed by the gamma and epsilon chains, while a peripheral stalk is formed by the delta and b chains.

The protein resides in the cell inner membrane. F(1)F(0) ATP synthase produces ATP from ADP in the presence of a proton or sodium gradient. F-type ATPases consist of two structural domains, F(1) containing the extramembraneous catalytic core and F(0) containing the membrane proton channel, linked together by a central stalk and a peripheral stalk. During catalysis, ATP synthesis in the catalytic domain of F(1) is coupled via a rotary mechanism of the central stalk subunits to proton translocation. Functionally, this protein is part of the stalk that links CF(0) to CF(1). It either transmits conformational changes from CF(0) to CF(1) or is implicated in proton conduction. In Parvibaculum lavamentivorans (strain DS-1 / DSM 13023 / NCIMB 13966), this protein is ATP synthase subunit delta.